The following is a 674-amino-acid chain: MFERNQKTIFVLDHTRYFSIASEEYISMDFLKGKPSAHSSAGGSSQFSKSLWTCACESSIEYCRVVWDLFPGKKHVRFIVSDTAAHIVNTWSASTQNMSHVMNAMVMVGVPSRSMPQSSDYSVIHGLRAAIEALAEPTDEQSQAMASGVPDDLILNEGRVICITSARDNTSMKSLEDIFNTVLIQQNVLSATPPKKGLGINHCHLVILNIVPLGIDSMVTNRNLLEISPLLDVEIHTVGAPDISYKLTHLILDHYDLASTTVTNIPMKEEQNANSSANYDVEILHSRRAHSITCGPDFSLPTSIKQGATYETVTLKWCTPRGCGSADLQPCLGQFLVTPVDVTSRPSSCLINFLLNGRSVLLEMPRKTGSKATSHMLSARGGEIFIHSLCITRSCMDEAPSIADGPGGRVNDYRTSELGQLMKMSRMVPLKSRDPAAPNLPRRLPRYFPLTTTSTVLFHLQRHLSWLPHFLHLLVKEMDKQDEVRCQQHIHELYKSASRGDVLPFTHTNGARLKPHKAKDQYRLLYRELEQLIQLNASTVHHKNLLESLQTLRAAYGDAPSKSEAGTANLRSFTESPLSPERLEAMSNVSISSSTNSNSLLKASKRRMSNCGTRSLLDIISSAERSQSNKRLDFSGRICTPIGQIAKLYPDFGNKEKDAAAAAAASGVGVAPKE.

Residues His516–Ser538 adopt a coiled-coil conformation. Positions Pro560–Ser579 are disordered. Over residues Glu564–Pro577 the composition is skewed to polar residues. A Nuclear localization signal (NLS) motif is present at residues Leu601–Arg607.

It belongs to the Integrator subunit 13 family. As to quaternary structure, belongs to the multiprotein complex Integrator, at least composed of IntS1, IntS2, IntS3, IntS4, omd/IntS5, IntS6, defl/IntS7, IntS8, IntS9, IntS10, IntS11, IntS12, asun/IntS13, IntS14 and IntS15. The core complex associates with protein phosphatase 2A subunits mts/PP2A and Pp2A-29B, to form the Integrator-PP2A (INTAC) complex. Post-translationally, phosphorylated.

The protein resides in the nucleus. It is found in the cytoplasm. The protein localises to the perinuclear region. Functionally, component of the integrator complex, a multiprotein complex that terminates RNA polymerase II (Pol II) transcription in the promoter-proximal region of genes. The integrator complex provides a quality checkpoint during transcription elongation by driving premature transcription termination of transcripts that are unfavorably configured for transcriptional elongation: the complex terminates transcription by (1) catalyzing dephosphorylation of the C-terminal domain (CTD) of Pol II subunit Polr2A/Rbp1 and Spt5, and (2) degrading the exiting nascent RNA transcript via endonuclease activity. The integrator complex is also involved in the 3'-end processing of the U7 snRNA, and also the spliceosomal snRNAs U1, U2, U4 and U5. In Drosophila pseudoobscura pseudoobscura (Fruit fly), this protein is Protein asunder (asun).